The sequence spans 567 residues: MNARLASSRAWVWCFLMVGLVCGATAKAESKINYRRISLRVTDKTTGDEYFRFITILRDYVSIGSFSNDIPLLRQSTIPVSDAQRFVLVELTNQWGDSITAAIDVTNLYVVAYQAAGQSYYLRDAPHGAERHLFTGTTRSSLPFNGSYADLERYAGHRDRIPLGREPLLRSVSALHYPGGSTRAQASSIIIVIQMISEAARFNPILWRARQYINRGVSFLPDVYMLELETSWGRQSTQVQQSTDGVFNNPIRLGISTGNFVTLSNVRDVIPSLAIMVFVCRDRSSSSDVHNWPLVIRPVMVDDVTCTTSEPTVRIVGRNGMCLDVRDSDYRDGSRIQLWPCKSNSDPNQLWTIRRDGTIRSNGSCLTTYGYTAGSYIMMYDCNRAGWDLTTWQIRGNGIIFNPRSKMVIGTPSGSRGTRGTTFTLQTLDDSLGQSWLASNDTAPREVTIYGFRDLCMETSGGRVWVESCVSSKQNQRWALYGDGSIRPKPYQDQCLTSQGDSVRSVINLFSCTAGSPRQRWVFTNKGTILNLKNGLALDVRESNPSLRQIIIFSVSGNPNQMWLPVP.

The first 33 residues, 1 to 33, serve as a signal peptide directing secretion; it reads MNARLASSRAWVWCFLMVGLVCGATAKAESKIN. N-linked (GlcNAc...) asparagine glycosylation is present at Asn145. Residue Glu198 is part of the active site. 2 cysteine pairs are disulfide-bonded: Cys280/Cys306 and Cys322/Cys341. Positions 288–301 are cleaved as a propeptide — connecting peptide; the sequence is DVHNWPLVIRPVMV. The Ricin B-type lectin 1 domain occupies 309 to 439; that stretch reads SEPTVRIVGR…DSLGQSWLAS (131 aa). Residue 324-326 participates in D-galactose binding; sequence DVR. Asn362 carries an N-linked (GlcNAc...) asparagine glycan. Cys365 and Cys382 are oxidised to a cystine. An N-linked (GlcNAc...) asparagine glycan is attached at Asn440. A Ricin B-type lectin 2 domain is found at 443–566; it reads APREVTIYGF…GNPNQMWLPV (124 aa). 2 disulfides stabilise this stretch: Cys456-Cys469 and Cys495-Cys512. 539–541 contributes to the D-galactose binding site; the sequence is DVR.

Belongs to the ribosome-inactivating protein family. Type 2 RIP subfamily. In terms of assembly, disulfide-linked dimer of A and B chains.

It carries out the reaction Endohydrolysis of the N-glycosidic bond at one specific adenosine on the 28S rRNA.. The A chain is responsible for inhibiting protein synthesis through the catalytic inactivation of 60S ribosomal subunits by removing adenine from position 4,324 of 28S rRNA. The B chain binds to cell receptors and probably facilitates the entry into the cell of the A chain; B chains are also responsible for cell agglutination (lectin activity). The protein is Beta-galactoside-specific lectin 2 of Viscum album (European mistletoe).